The chain runs to 129 residues: Glycine cleavage system H protein (129 aa).

The Lipoyl-binding domain maps to 24-106 (TYTVGITEHA…YAGGWIFKIK (83 aa)). Lys65 carries the N6-lipoyllysine modification.

Belongs to the GcvH family. In terms of assembly, the glycine cleavage system is composed of four proteins: P, T, L and H. (R)-lipoate serves as cofactor.

The glycine cleavage system catalyzes the degradation of glycine. The H protein shuttles the methylamine group of glycine from the P protein to the T protein. The chain is Glycine cleavage system H protein from Escherichia fergusonii (strain ATCC 35469 / DSM 13698 / CCUG 18766 / IAM 14443 / JCM 21226 / LMG 7866 / NBRC 102419 / NCTC 12128 / CDC 0568-73).